The following is a 291-amino-acid chain: Transmembrane protein 41B (291 aa).

Residues 1–39 (MAKGRVAERSQLGAHHTTPVGDGAAGTRGLAAPGSRDHQ) are disordered. Phosphothreonine is present on T18. S35 is modified (phosphoserine). The next 6 helical transmembrane spans lie at 52–72 (MSLL…FLVY), 109–129 (FYVQ…TFAI), 147–169 (LALF…LSYL), 197–217 (LINY…FINI), 225–245 (PLKV…FVAI), and 262–282 (SWNS…PAIF). The VTT domain; required for its function in autophagy stretch occupies residues 140 to 251 (GFLYPFPLAL…FVAIKAGTTL (112 aa)).

Belongs to the TMEM41 family. In terms of assembly, interacts with VMP1. Interacts with COPA, COPB1, VDAC1 and ERLIN2. Interacts with ATG2A. Interacts with SURF4. As to quaternary structure, (Microbial infection) Interacts with Zika virus NS4A protein and Yellow fever virus NS4B protein.

Its subcellular location is the endoplasmic reticulum membrane. The protein localises to the endomembrane system. It localises to the cytoplasm. It carries out the reaction a 1,2-diacyl-sn-glycero-3-phospho-L-serine(in) = a 1,2-diacyl-sn-glycero-3-phospho-L-serine(out). It catalyses the reaction cholesterol(in) = cholesterol(out). The enzyme catalyses a 1,2-diacyl-sn-glycero-3-phosphocholine(in) = a 1,2-diacyl-sn-glycero-3-phosphocholine(out). The catalysed reaction is a 1,2-diacyl-sn-glycero-3-phosphoethanolamine(in) = a 1,2-diacyl-sn-glycero-3-phosphoethanolamine(out). Functionally, phospholipid scramblase involved in lipid homeostasis and membrane dynamics processes. Has phospholipid scramblase activity toward cholesterol and phosphatidylserine, as well as phosphatidylethanolamine and phosphatidylcholine. Required for autophagosome formation: participates in early stages of autophagosome biogenesis at the endoplasmic reticulum (ER) membrane by reequilibrating the leaflets of the ER as lipids are extracted by ATG2 (ATG2A or ATG2B) to mediate autophagosome assembly. In addition to autophagy, involved in other processes in which phospholipid scramblase activity is required. Required for normal motor neuron development. (Microbial infection) Critical host factor required for infection by human coronaviruses SARS-CoV-2, HCoV-OC43, HCoV-NL63, and HCoV-229E, as well as all flaviviruses tested such as Zika virus and Yellow fever virus. Required post-entry of the virus to facilitate the ER membrane remodeling necessary to form replication organelles. This chain is Transmembrane protein 41B, found in Homo sapiens (Human).